The chain runs to 85 residues: UPF0335 protein BH15140 (85 aa).

The protein belongs to the UPF0335 family.

The polypeptide is UPF0335 protein BH15140 (Bartonella henselae (strain ATCC 49882 / DSM 28221 / CCUG 30454 / Houston 1) (Rochalimaea henselae)).